The chain runs to 281 residues: D-arabinitol 2-dehydrogenase [ribulose-forming] (281 aa).

NADP(+) is bound by residues leucine 31 and asparagine 52. Serine 169 acts as the Proton donor in catalysis. NADP(+)-binding residues include tyrosine 184, lysine 188, isoleucine 217, and threonine 219. Tyrosine 184 acts as the Proton acceptor in catalysis. Lysine 188 acts as the Lowers pKa of active site Tyr in catalysis.

It belongs to the short-chain dehydrogenases/reductases (SDR) family.

It carries out the reaction D-arabinitol + NAD(+) = D-ribulose + NADH + H(+). The protein operates within carbohydrate metabolism; D-arabinitol metabolism. The polypeptide is D-arabinitol 2-dehydrogenase [ribulose-forming] (ARD1) (Candida albicans (strain WO-1) (Yeast)).